Here is a 1116-residue protein sequence, read N- to C-terminus: Protein translocase subunit SecA (1116 aa).

Residues Gln177, 195–199, and Asp692 each bind ATP; that span reads GEGKT.

This sequence belongs to the SecA family. Monomer and homodimer. Part of the essential Sec protein translocation apparatus which comprises SecA, SecYEG and auxiliary proteins SecDF. Other proteins may also be involved.

It localises to the cell inner membrane. Its subcellular location is the cytoplasm. The enzyme catalyses ATP + H2O + cellular proteinSide 1 = ADP + phosphate + cellular proteinSide 2.. Part of the Sec protein translocase complex. Interacts with the SecYEG preprotein conducting channel. Has a central role in coupling the hydrolysis of ATP to the transfer of proteins into and across the cell membrane, serving as an ATP-driven molecular motor driving the stepwise translocation of polypeptide chains across the membrane. The sequence is that of Protein translocase subunit SecA from Flavobacterium psychrophilum (strain ATCC 49511 / DSM 21280 / CIP 103535 / JIP02/86).